The chain runs to 49 residues: YLDHWLGAPAPYPDPLEPRREVCELNPDCDELADHIGFQEAYRRFYGPV.

The region spanning 1–47 (YLDHWLGAPAPYPDPLEPRREVCELNPDCDELADHIGFQEAYRRFYG) is the Gla domain. Pro-9 is modified (hydroxyproline). Residues Glu-17, Glu-21, Glu-24, and Asp-30 each contribute to the Ca(2+) site. 3 positions are modified to 4-carboxyglutamate: Glu-17, Glu-21, and Glu-24. The cysteines at positions 23 and 29 are disulfide-linked.

Belongs to the osteocalcin/matrix Gla protein family. Post-translationally, gamma-carboxyglutamate residues are formed by vitamin K dependent carboxylation by GGCX. These residues are essential for the binding of calcium. Decarboxylation promotes the hormone activity.

The protein localises to the secreted. The carboxylated form is one of the main organic components of the bone matrix, which constitutes 1-2% of the total bone protein. It acts as a negative regulator of bone formation and is required to limit bone formation without impairing bone resorption or mineralization. The carboxylated form binds strongly to apatite and calcium. Its function is as follows. The uncarboxylated form acts as a hormone secreted by osteoblasts, which regulates different cellular processes, such as energy metabolism, male fertility and brain development. Regulates of energy metabolism by acting as a hormone favoring pancreatic beta-cell proliferation, insulin secretion and sensitivity and energy expenditure. Uncarboxylated osteocalcin hormone also promotes testosterone production in the testes: acts as a ligand for G protein-coupled receptor GPRC6A at the surface of Leydig cells, initiating a signaling response that promotes the expression of enzymes required for testosterone synthesis in a CREB-dependent manner. Also acts as a regulator of brain development: osteocalcin hormone crosses the blood-brain barrier and acts as a ligand for GPR158 on neurons, initiating a signaling response that prevents neuronal apoptosis in the hippocampus, favors the synthesis of all monoamine neurotransmitters and inhibits that of gamma-aminobutyric acid (GABA). Osteocalcin also crosses the placenta during pregnancy and maternal osteocalcin is required for fetal brain development. This is Osteocalcin (BGLAP) from Equus caballus (Horse).